A 95-amino-acid chain; its full sequence is Large ribosomal subunit protein eL37z (95 aa).

Residues C19, C22, C34, and C37 each coordinate Zn(2+). Residues 19-37 form a C4-type zinc finger; that stretch reads CVRCGRRSFHIQKSRCSAC.

This sequence belongs to the eukaryotic ribosomal protein eL37 family. Zn(2+) is required as a cofactor.

In terms of biological role, binds to the 23S rRNA. In Arabidopsis thaliana (Mouse-ear cress), this protein is Large ribosomal subunit protein eL37z (RPL37A).